A 210-amino-acid polypeptide reads, in one-letter code: Large ribosomal subunit protein uL4 (210 aa).

The span at 44 to 54 shows a compositional bias: polar residues; that stretch reads KRQGTASTLTR. Positions 44 to 85 are disordered; that stretch reads KRQGTASTLTRSEVRGGGRKPYKQKGTGRARQGSIRTPLRPG. Over residues 60–71 the composition is skewed to basic residues; that stretch reads GGRKPYKQKGTG.

It belongs to the universal ribosomal protein uL4 family. Part of the 50S ribosomal subunit.

Its function is as follows. One of the primary rRNA binding proteins, this protein initially binds near the 5'-end of the 23S rRNA. It is important during the early stages of 50S assembly. It makes multiple contacts with different domains of the 23S rRNA in the assembled 50S subunit and ribosome. In terms of biological role, forms part of the polypeptide exit tunnel. The sequence is that of Large ribosomal subunit protein uL4 from Prochlorococcus marinus (strain MIT 9301).